Reading from the N-terminus, the 419-residue chain is Carboxypeptidase A1 (419 aa).

The signal sequence occupies residues 1–16 (MKRLLILSLLLEAVCG). A propeptide spans 17 to 110 (NENFVGHQVL…KQQMSAFQAR (94 aa)) (activation peptide). The region spanning 121-414 (TYHTLDEIYE…LALLTIMDHT (294 aa)) is the Peptidase M14 domain. Zn(2+)-binding residues include histidine 179 and glutamate 182. Substrate-binding positions include 179 to 182 (HSRE), arginine 237, and 254 to 255 (NR). A disulfide bond links cysteine 248 and cysteine 271. Histidine 306 lines the Zn(2+) pocket. Substrate-binding positions include 307-308 (SY) and tyrosine 358. Residue glutamate 380 is the Proton donor/acceptor of the active site.

Belongs to the peptidase M14 family. Monomer. May form a complex with proelastase 2. Requires Zn(2+) as cofactor.

The protein localises to the secreted. It catalyses the reaction Release of a C-terminal amino acid, but little or no action with -Asp, -Glu, -Arg, -Lys or -Pro.. It carries out the reaction leukotriene C4 + H2O = leukotriene F4 + glycine. In terms of biological role, carboxypeptidase that catalyzes the release of a C-terminal amino acid, but has little or no action with -Asp, -Glu, -Arg, -Lys or -Pro. Catalyzes the conversion of leukotriene C4 to leukotriene F4 via the hydrolysis of an amide bond. In Rattus norvegicus (Rat), this protein is Carboxypeptidase A1.